Here is a 201-residue protein sequence, read N- to C-terminus: Holliday junction resolvase RecU (201 aa).

Positions 85, 87, 100, and 119 each coordinate Mg(2+).

This sequence belongs to the RecU family. Mg(2+) is required as a cofactor.

Its subcellular location is the cytoplasm. The enzyme catalyses Endonucleolytic cleavage at a junction such as a reciprocal single-stranded crossover between two homologous DNA duplexes (Holliday junction).. Functionally, endonuclease that resolves Holliday junction intermediates in genetic recombination. Cleaves mobile four-strand junctions by introducing symmetrical nicks in paired strands. Promotes annealing of linear ssDNA with homologous dsDNA. Required for DNA repair, homologous recombination and chromosome segregation. The polypeptide is Holliday junction resolvase RecU (Geobacillus thermodenitrificans (strain NG80-2)).